The chain runs to 225 residues: Doublesex- and mab-3-related transcription factor C1 (225 aa).

Basic and acidic residues predominate over residues 1 to 12 (MQRPSGSREVRK). Disordered regions lie at residues 1-49 (MQRP…SHVH) and 179-216 (QTRH…LPSG). The segment covering 27–37 (RVKKHVVRRQK) has biased composition (basic residues).

It belongs to the DMRT family.

The polypeptide is Doublesex- and mab-3-related transcription factor C1 (Dmrtc1) (Rattus norvegicus (Rat)).